The sequence spans 353 residues: Putative glutamine synthetase (353 aa).

The GS beta-grasp domain maps to Ser19 to Gly102. Positions His109–Asp353 constitute a GS catalytic domain.

It belongs to the glutamine synthetase family.

The catalysed reaction is L-glutamate + NH4(+) + ATP = L-glutamine + ADP + phosphate + H(+). This chain is Putative glutamine synthetase, found in Acanthamoeba polyphaga (Amoeba).